The chain runs to 199 residues: GTP cyclohydrolase-2 (199 aa).

Residue 52–56 (RMHSE) participates in GTP binding. Zn(2+) is bound by residues Cys-57, Cys-68, and Cys-70. GTP is bound by residues Gln-73, 94–96 (EGR), and Thr-116. Asp-128 (proton acceptor) is an active-site residue. Catalysis depends on Arg-130, which acts as the Nucleophile. GTP contacts are provided by Thr-151 and Lys-156.

It belongs to the GTP cyclohydrolase II family. Requires Zn(2+) as cofactor.

The catalysed reaction is GTP + 4 H2O = 2,5-diamino-6-hydroxy-4-(5-phosphoribosylamino)-pyrimidine + formate + 2 phosphate + 3 H(+). It participates in cofactor biosynthesis; riboflavin biosynthesis; 5-amino-6-(D-ribitylamino)uracil from GTP: step 1/4. Functionally, catalyzes the conversion of GTP to 2,5-diamino-6-ribosylamino-4(3H)-pyrimidinone 5'-phosphate (DARP), formate and pyrophosphate. This Aliivibrio fischeri (strain ATCC 700601 / ES114) (Vibrio fischeri) protein is GTP cyclohydrolase-2.